A 750-amino-acid chain; its full sequence is Catalase A (750 aa).

The interval Glu-30–Arg-49 is disordered. Catalysis depends on residues His-93 and Asn-166. A heme-binding site is contributed by Tyr-380.

Belongs to the catalase family. Requires heme as cofactor.

Its subcellular location is the peroxisome matrix. It carries out the reaction 2 H2O2 = O2 + 2 H2O. Catalyzes the degradation of hydrogen peroxide (H(2)O(2)) generated by peroxisomal oxidases to water and oxygen, thereby protecting cells from the toxic effects of hydrogen peroxide. The chain is Catalase A (catA) from Aspergillus fumigatus (strain ATCC MYA-4609 / CBS 101355 / FGSC A1100 / Af293) (Neosartorya fumigata).